A 225-amino-acid polypeptide reads, in one-letter code: Small ribosomal subunit protein mS26 (225 aa).

The protein belongs to the mitochondrion-specific ribosomal protein mS26 family. Component of the mitochondrial ribosome small subunit (28S) which comprises a 12S rRNA and about 30 distinct proteins.

Its subcellular location is the mitochondrion. The polypeptide is Small ribosomal subunit protein mS26 (mRpS26) (Drosophila melanogaster (Fruit fly)).